The sequence spans 629 residues: Flap endonuclease GEN-like 1 (629 aa).

Positions 1–87 are N-domain; the sequence is MGVGGSFWDL…DGQPSPLKSQ (87 aa). Positions 2–98 are XPG-N domain; that stretch reads GVGGSFWDLL…RAARFFRGSG (97 aa). Positions 31, 78, 148, 150, 169, 171, and 221 each coordinate Mg(2+). The segment at 136 to 221 is XPG-I domain; that stretch reads EYLGMPVLRA…VAMALLVGSD (86 aa). An I-domain region spans residues 136-225; it reads EYLGMPVLRA…LLVGSDHDLH (90 aa). Positions 221–421 are 5'-3' exonuclease domain; that stretch reads DHDLHGVPGF…MLPMLSTIYL (201 aa). The interval 594-617 is disordered; it reads KKGLSGDSGKDGSRKSSDVDLSKN. Residues 601 to 614 are compositionally biased toward basic and acidic residues; sequence SGKDGSRKSSDVDL.

This sequence belongs to the XPG/RAD2 endonuclease family. GEN subfamily. In terms of assembly, monomer. Interacts with PCNA. PCNA stimulates the nuclease activity without altering cleavage specificity. The cofactor is Mg(2+). Highly expressed in anthers. Expressed in roots and leaves.

Its subcellular location is the nucleus. Endonuclease which cleaves flap structures at the junction between single-stranded DNA and double-stranded DNA. Possesses both single-stranded and double-stranded DNA-binding activities. Involved in early microspore development, but does not alter meiosis or tapetal cells development. Possesses Holliday junction (HJ) resolvase activity in vitro. Cleaves HJ at symmetrically related sites of the branch point. This Oryza sativa subsp. japonica (Rice) protein is Flap endonuclease GEN-like 1.